A 204-amino-acid polypeptide reads, in one-letter code: Ubiquitin-conjugating enzyme E2 T (204 aa).

One can recognise a UBC core domain in the interval 2 to 152 (QRASRLKKEL…AKQWTEAHAR (151 aa)). The Glycyl thioester intermediate role is filled by C86. Glycyl lysine isopeptide (Lys-Gly) (interchain with G-Cter in ubiquitin) cross-links involve residues K91 and K181. Residues 150–204 (HARQKQKADEEELGTSSEVGDSEESHSTQKRKARPLGGMEKKFSPDVQRVYPGPS) are disordered. Residues K190 and K191 each participate in a glycyl lysine isopeptide (Lys-Gly) (interchain with G-Cter in SUMO2) cross-link. At S193 the chain carries Phosphoserine.

The protein belongs to the ubiquitin-conjugating enzyme family. Interacts with FANCL and BRCA1. In terms of processing, auto-ubiquitinated. Effects of auto-monoubiquitination at Lys-91 and Lys-181 are unclear.

The protein resides in the nucleus. It catalyses the reaction S-ubiquitinyl-[E1 ubiquitin-activating enzyme]-L-cysteine + [E2 ubiquitin-conjugating enzyme]-L-cysteine = [E1 ubiquitin-activating enzyme]-L-cysteine + S-ubiquitinyl-[E2 ubiquitin-conjugating enzyme]-L-cysteine.. Its pathway is protein modification; protein ubiquitination. Accepts ubiquitin from the E1 complex and catalyzes its covalent attachment to other proteins. Catalyzes monoubiquitination. Involved in mitomycin-C (MMC)-induced DNA repair: acts as a specific E2 ubiquitin-conjugating enzyme for the Fanconi anemia complex by associating with E3 ubiquitin-protein ligase FANCL and catalyzing monoubiquitination of FANCD2, a key step in the DNA damage pathway. Also mediates monoubiquitination of FANCL and FANCI. May contribute to ubiquitination and degradation of BRCA1. In vitro able to promote polyubiquitination using all 7 ubiquitin Lys residues, but may prefer 'Lys-11'-, 'Lys-27'-, 'Lys-48'- and 'Lys-63'-linked polyubiquitination. The polypeptide is Ubiquitin-conjugating enzyme E2 T (Ube2t) (Mus musculus (Mouse)).